Consider the following 90-residue polypeptide: Major envelope protein (90 aa).

A helical membrane pass occupies residues 53-70 (AVSVVSWAVAAGLIGELI).

The protein localises to the virion membrane. Functionally, essential for membrane formation. This is Major envelope protein (P9) from Pseudomonas savastanoi pv. phaseolicola (Pseudomonas syringae pv. phaseolicola).